Here is a 131-residue protein sequence, read N- to C-terminus: Large ribosomal subunit protein bL19c (131 aa).

Belongs to the bacterial ribosomal protein bL19 family.

The protein resides in the plastid. The protein localises to the cyanelle. Functionally, this protein is located at the 30S-50S ribosomal subunit interface and may play a role in the structure and function of the aminoacyl-tRNA binding site. The chain is Large ribosomal subunit protein bL19c (rpl19) from Cyanophora paradoxa.